We begin with the raw amino-acid sequence, 356 residues long: Arginine kinase (356 aa).

N-acetylalanine is present on A2. One can recognise a Phosphagen kinase N-terminal domain in the interval 9 to 91 (KLEEGFKKLE…FDPIIEDYHK (83 aa)). An L-arginine-binding site is contributed by 64-68 (GVGIY). In terms of domain architecture, Phosphagen kinase C-terminal spans 119-356 (FVISTRVRCG…LELIKIEKEM (238 aa)). Residues 122–126 (STRVR) and H185 contribute to the ATP site. E225 provides a ligand contact to L-arginine. R229 serves as a coordination point for ATP. An L-arginine-binding site is contributed by C271. ATP contacts are provided by residues 280 to 284 (RASVH) and 309 to 314 (RGTRGE). E314 contacts L-arginine.

The protein belongs to the ATP:guanido phosphotransferase family.

The catalysed reaction is L-arginine + ATP = N(omega)-phospho-L-arginine + ADP + H(+). The chain is Arginine kinase from Homarus gammarus (European lobster).